The sequence spans 254 residues: 5-oxoprolinase subunit A (254 aa).

It belongs to the LamB/PxpA family. Forms a complex composed of PxpA, PxpB and PxpC.

It carries out the reaction 5-oxo-L-proline + ATP + 2 H2O = L-glutamate + ADP + phosphate + H(+). Its function is as follows. Catalyzes the cleavage of 5-oxoproline to form L-glutamate coupled to the hydrolysis of ATP to ADP and inorganic phosphate. This Rhodopseudomonas palustris (strain ATCC BAA-98 / CGA009) protein is 5-oxoprolinase subunit A.